The sequence spans 431 residues: Serine hydroxymethyltransferase (431 aa).

(6S)-5,6,7,8-tetrahydrofolate-binding positions include L128 and G132–L134. N6-(pyridoxal phosphate)lysine is present on K237.

The protein belongs to the SHMT family. Homodimer. Pyridoxal 5'-phosphate serves as cofactor.

The protein resides in the cytoplasm. It carries out the reaction (6R)-5,10-methylene-5,6,7,8-tetrahydrofolate + glycine + H2O = (6S)-5,6,7,8-tetrahydrofolate + L-serine. It participates in one-carbon metabolism; tetrahydrofolate interconversion. The protein operates within amino-acid biosynthesis; glycine biosynthesis; glycine from L-serine: step 1/1. In terms of biological role, catalyzes the reversible interconversion of serine and glycine with tetrahydrofolate (THF) serving as the one-carbon carrier. This reaction serves as the major source of one-carbon groups required for the biosynthesis of purines, thymidylate, methionine, and other important biomolecules. Also exhibits THF-independent aldolase activity toward beta-hydroxyamino acids, producing glycine and aldehydes, via a retro-aldol mechanism. This is Serine hydroxymethyltransferase from Ruegeria pomeroyi (strain ATCC 700808 / DSM 15171 / DSS-3) (Silicibacter pomeroyi).